Consider the following 295-residue polypeptide: Protoheme IX farnesyltransferase (295 aa).

Transmembrane regions (helical) follow at residues I9–A29, F36–F56, L80–L100, L108–L128, G135–S155, L163–F183, I209–A229, G230–K250, and F265–V285.

Belongs to the UbiA prenyltransferase family. Protoheme IX farnesyltransferase subfamily.

It localises to the cell inner membrane. The enzyme catalyses heme b + (2E,6E)-farnesyl diphosphate + H2O = Fe(II)-heme o + diphosphate. The protein operates within porphyrin-containing compound metabolism; heme O biosynthesis; heme O from protoheme: step 1/1. Functionally, converts heme B (protoheme IX) to heme O by substitution of the vinyl group on carbon 2 of heme B porphyrin ring with a hydroxyethyl farnesyl side group. The sequence is that of Protoheme IX farnesyltransferase from Pseudomonas syringae pv. tomato (strain ATCC BAA-871 / DC3000).